A 166-amino-acid chain; its full sequence is Small ribosomal subunit protein uS5 (166 aa).

The S5 DRBM domain maps to 11–74 (LQEKLIAVNR…EKARRNMMNV (64 aa)).

This sequence belongs to the universal ribosomal protein uS5 family. Part of the 30S ribosomal subunit. Contacts proteins S4 and S8.

In terms of biological role, with S4 and S12 plays an important role in translational accuracy. Located at the back of the 30S subunit body where it stabilizes the conformation of the head with respect to the body. The sequence is that of Small ribosomal subunit protein uS5 from Sodalis glossinidius (strain morsitans).